The chain runs to 146 residues: Large ribosomal subunit protein uL13 (146 aa).

The interval 126-146 (AGPKHPHAAQQPKVYEPRPRG) is disordered.

It belongs to the universal ribosomal protein uL13 family. Part of the 50S ribosomal subunit.

This protein is one of the early assembly proteins of the 50S ribosomal subunit, although it is not seen to bind rRNA by itself. It is important during the early stages of 50S assembly. The chain is Large ribosomal subunit protein uL13 from Roseiflexus castenholzii (strain DSM 13941 / HLO8).